Here is a 280-residue protein sequence, read N- to C-terminus: L-aspartate dehydrogenase (280 aa).

2 residues coordinate NAD(+): Ala134 and Asn202. His232 is a catalytic residue.

It belongs to the L-aspartate dehydrogenase family.

The catalysed reaction is L-aspartate + NADP(+) + H2O = oxaloacetate + NH4(+) + NADPH + H(+). The enzyme catalyses L-aspartate + NAD(+) + H2O = oxaloacetate + NH4(+) + NADH + H(+). The protein operates within cofactor biosynthesis; NAD(+) biosynthesis; iminoaspartate from L-aspartate (dehydrogenase route): step 1/1. Its function is as follows. Specifically catalyzes the NAD or NADP-dependent dehydrogenation of L-aspartate to iminoaspartate. This is L-aspartate dehydrogenase from Bradyrhizobium diazoefficiens (strain JCM 10833 / BCRC 13528 / IAM 13628 / NBRC 14792 / USDA 110).